Reading from the N-terminus, the 389-residue chain is S-adenosylmethionine synthase (389 aa).

Residue His-15 participates in ATP binding. Mg(2+) is bound at residue Asp-17. Glu-43 provides a ligand contact to K(+). Positions 56 and 99 each coordinate L-methionine. A flexible loop region spans residues Gln-99–Glu-109. Residues Asp-166–Lys-168, Arg-234–Phe-235, Asp-243, Arg-249–Lys-250, Ala-266, and Lys-270 each bind ATP. Position 243 (Asp-243) interacts with L-methionine. Lys-274 contributes to the L-methionine binding site.

The protein belongs to the AdoMet synthase family. As to quaternary structure, homotetramer; dimer of dimers. Requires Mg(2+) as cofactor. K(+) is required as a cofactor.

The protein resides in the cytoplasm. The catalysed reaction is L-methionine + ATP + H2O = S-adenosyl-L-methionine + phosphate + diphosphate. The protein operates within amino-acid biosynthesis; S-adenosyl-L-methionine biosynthesis; S-adenosyl-L-methionine from L-methionine: step 1/1. Functionally, catalyzes the formation of S-adenosylmethionine (AdoMet) from methionine and ATP. The overall synthetic reaction is composed of two sequential steps, AdoMet formation and the subsequent tripolyphosphate hydrolysis which occurs prior to release of AdoMet from the enzyme. This Neisseria meningitidis serogroup C (strain 053442) protein is S-adenosylmethionine synthase.